The sequence spans 341 residues: HTH-type transcriptional repressor PurR (341 aa).

An HTH lacI-type domain is found at 2–56 (ATIKDVAKRANVSTTTVSHVINKTRFVAEETRNAVWTAIKELHYSPSAVARSLKV). The H-T-H motif DNA-binding region spans 4-23 (IKDVAKRANVSTTTVSHVIN). The DNA-binding element occupies 48–56 (SAVARSLKV). Positions 73, 190, 192, 221, and 275 each coordinate hypoxanthine.

As to quaternary structure, homodimer.

Its pathway is purine metabolism; purine nucleotide biosynthesis [regulation]. In terms of biological role, is the main repressor of the genes involved in the de novo synthesis of purine nucleotides, regulating purB, purC, purEK, purF, purHD, purL, purMN and guaBA expression. PurR is allosterically activated to bind its cognate DNA by binding the purine corepressors, hypoxanthine or guanine, thereby effecting transcription repression. The protein is HTH-type transcriptional repressor PurR of Salmonella paratyphi A (strain ATCC 9150 / SARB42).